We begin with the raw amino-acid sequence, 165 residues long: Crossover junction endodeoxyribonuclease RuvC (165 aa).

Residues D7, E66, and D138 contribute to the active site. D7, E66, and D138 together coordinate Mg(2+).

This sequence belongs to the RuvC family. Homodimer which binds Holliday junction (HJ) DNA. The HJ becomes 2-fold symmetrical on binding to RuvC with unstacked arms; it has a different conformation from HJ DNA in complex with RuvA. In the full resolvosome a probable DNA-RuvA(4)-RuvB(12)-RuvC(2) complex forms which resolves the HJ. Mg(2+) serves as cofactor.

The protein resides in the cytoplasm. It catalyses the reaction Endonucleolytic cleavage at a junction such as a reciprocal single-stranded crossover between two homologous DNA duplexes (Holliday junction).. In terms of biological role, the RuvA-RuvB-RuvC complex processes Holliday junction (HJ) DNA during genetic recombination and DNA repair. Endonuclease that resolves HJ intermediates. Cleaves cruciform DNA by making single-stranded nicks across the HJ at symmetrical positions within the homologous arms, yielding a 5'-phosphate and a 3'-hydroxyl group; requires a central core of homology in the junction. The consensus cleavage sequence is 5'-(A/T)TT(C/G)-3'. Cleavage occurs on the 3'-side of the TT dinucleotide at the point of strand exchange. HJ branch migration catalyzed by RuvA-RuvB allows RuvC to scan DNA until it finds its consensus sequence, where it cleaves and resolves the cruciform DNA. The polypeptide is Crossover junction endodeoxyribonuclease RuvC (Ruegeria pomeroyi (strain ATCC 700808 / DSM 15171 / DSS-3) (Silicibacter pomeroyi)).